The sequence spans 354 residues: Nucleoporin seh1 (354 aa).

WD repeat units lie at residues 10-49, 55-96, 112-153, 161-209, 216-259, and 270-309; these read DHKDVIHDVVFDYYGRRMATCSSDQTVKIWDEDGQGKWNV, AHSG…KVSS, DSRT…NLSQ, SNKL…RKCV, DITD…TDIS, and EHNCPVWRVCWNMLATMLISTGDDGCVRLWRMNYNRQWRC.

Belongs to the WD repeat SEC13 family. As to quaternary structure, probable component of the nuclear pore complex (NPC). Component of the GATOR complex consisting of mio, Nup44A/Seh1, Im11, Nplr3, Nplr2, Wdr24, Wdr59 and Sec13. Within the GATOR complex, probable component of the GATOR2 subcomplex which is likely composed of mio, Nup44A/Seh1, Wdr24, Wdr59 and Sec13. Interacts with mio. Interacts with Wdr24. The GATOR2 complex associates with unmet in the absence of S-adenosyl-L-methionine; the mio-Wdr24-Nup44A subcomplex is essential and sufficient for this interaction while Wdr59 and Sec13 are dispensable. This association acts as a nutrient sensor to inhibit mTORC1 signaling in the absence of methionine. Expressed in ovarian cysts.

Its subcellular location is the nucleus envelope. The protein resides in the lysosome. Probable component of the nuclear pore complex (NPC). Involved in maintaining the localization of another nucleoporin Mgtor to the nuclear envelope of early meiotic female germline cells. It is not involved in recruiting the nucleoporins Mgtor, Nup107, Nup153 and FG-containing nucleoporins to the NPC. In terms of biological role, an essential component of the GATOR subcomplex GATOR2 which functions as an activator of the amino acid-sensing branch of the mTORC1 signaling pathway. The two GATOR subcomplexes, GATOR1 and GATOR2, regulate the mTORC1 pathway in order to mediate metabolic homeostasis, female gametogenesis and the response to amino acid limitation and complete starvation. GATOR2 activates the mTORC1 signaling pathway through the inhibition of the GATOR1 subcomplex, controlling the switch to cell proliferation growth under nutrient replete conditions and growth during female oocyte development. This component is required for activating mTORC1 specifically in germline cells to promote cell growth and maintain the oocyte fate, probably influences the organization and/or function of microtubules within ovarian cysts, and promotes accumulation of another GATOR2 complex member mio in germline and somatic tissues. GATOR1 and GATOR2 act at different stages of oogenesis to regulate mTORC1 in order to control meiotic entry and promote oocyte growth and development. After exactly four mitotic cyst divisions, the GATOR1 complex members (Iml1, Nprl2 and Nprl3) down-regulate mTORC1 to slow cellular metabolism and promote the mitotic/meiotic transition. At later stages of oogenesis, the mio and Nup44A components of the GATOR2 complex inhibit GATOR1 and thus activate mTORC1 to promote meiotic progression, and drive oocyte growth and development. In addition to its role in the regulation of the mTORC1 complex, functions independently of mTORC1 to prevent the inappropriate accumulation of autolysosomes in germline tissues. The polypeptide is Nucleoporin seh1 (Drosophila melanogaster (Fruit fly)).